The sequence spans 274 residues: MNELKAIIEDAFENRDSISPSSAPDEVRDAVAQAIDLLNSGKGRVAEKIAGEWVVHQWLKKAVLLFFRLHNNDVIEGAESKFYDKVPLKYTNYTAEQFAADGARIVPPAAVRTGTFVGKNAVVMPSYVNIGAFVDEGTMVDTWATVGSCAQIGKNVHLSGGVGIGGVLEPLQANPTIIEDNCFIGARSEIVEGVIVEEGSVISMGVYIGQSTRIYDRETGEIHYGRVPAGSVVVAGNLPSADGKYSLYAAIIVKKVDAKTRAKVGINALLRGVE.

Belongs to the transferase hexapeptide repeat family.

The protein localises to the cytoplasm. It carries out the reaction (S)-2,3,4,5-tetrahydrodipicolinate + succinyl-CoA + H2O = (S)-2-succinylamino-6-oxoheptanedioate + CoA. Its pathway is amino-acid biosynthesis; L-lysine biosynthesis via DAP pathway; LL-2,6-diaminopimelate from (S)-tetrahydrodipicolinate (succinylase route): step 1/3. This is 2,3,4,5-tetrahydropyridine-2,6-dicarboxylate N-succinyltransferase from Alteromonas mediterranea (strain DSM 17117 / CIP 110805 / LMG 28347 / Deep ecotype).